Reading from the N-terminus, the 818-residue chain is LPS-assembly protein LptD (818 aa).

The first 33 residues, 1-33 (MVNETMKHQFKFNPLATAIFTLLCSGSIQSSYA), serve as a signal peptide directing secretion.

It belongs to the LptD family. In terms of assembly, component of the lipopolysaccharide transport and assembly complex. Interacts with LptE and LptA.

The protein localises to the cell outer membrane. Together with LptE, is involved in the assembly of lipopolysaccharide (LPS) at the surface of the outer membrane. This chain is LPS-assembly protein LptD, found in Acinetobacter baumannii (strain ATCC 19606 / DSM 30007 / JCM 6841 / CCUG 19606 / CIP 70.34 / NBRC 109757 / NCIMB 12457 / NCTC 12156 / 81).